Consider the following 485-residue polypeptide: Acyl transferase 1 (485 aa).

Histidine 172 acts as the Proton acceptor in catalysis.

Belongs to the plant acyltransferase family. As to expression, highly expressed in young panicles. Expressed in leaf sheaths and panicles.

In terms of biological role, involved in defense against pathogens. May contribute to disease resistance by potentiating disease resistance signaling, or producing phytoalexin-like secondary products. The chain is Acyl transferase 1 from Oryza sativa subsp. japonica (Rice).